The sequence spans 158 residues: Transcription elongation factor GreA (158 aa).

Residues 45-72 (AEYHAAREQQSFIEGRIKQLEGELSHAE) adopt a coiled-coil conformation.

This sequence belongs to the GreA/GreB family.

In terms of biological role, necessary for efficient RNA polymerase transcription elongation past template-encoded arresting sites. The arresting sites in DNA have the property of trapping a certain fraction of elongating RNA polymerases that pass through, resulting in locked ternary complexes. Cleavage of the nascent transcript by cleavage factors such as GreA or GreB allows the resumption of elongation from the new 3'terminus. GreA releases sequences of 2 to 3 nucleotides. This chain is Transcription elongation factor GreA, found in Xanthomonas campestris pv. campestris (strain ATCC 33913 / DSM 3586 / NCPPB 528 / LMG 568 / P 25).